Here is a 178-residue protein sequence, read N- to C-terminus: uncharacterized protein (178 aa).

This sequence belongs to the tail fiber family.

This is an uncharacterized protein from Escherichia coli (strain K12).